Here is a 638-residue protein sequence, read N- to C-terminus: Chaperone protein DnaK (638 aa).

Phosphothreonine; by autocatalysis is present on Thr198. 2 disordered regions span residues 539 to 559 (DGLA…LASD) and 602 to 638 (QAKA…DDKK). The span at 611–623 (GQAHDAGQEKPAD) shows a compositional bias: basic and acidic residues. The segment covering 624 to 638 (DVVDAEFEEVKDDKK) has biased composition (acidic residues).

It belongs to the heat shock protein 70 family.

Its function is as follows. Acts as a chaperone. The chain is Chaperone protein DnaK from Shewanella frigidimarina (strain NCIMB 400).